Consider the following 311-residue polypeptide: Acyl-CoA dehydrogenase IpdE2 (311 aa).

FAD contacts are provided by Arg-206 and Gly-273.

The protein belongs to the acyl-CoA dehydrogenase family. Heterotetramer composed of 2 IpdE1 subunits and 2 IpdE2 subunits. It depends on FAD as a cofactor.

The catalysed reaction is 3-[(3aS,4S,5R,7aS)-5-hydroxy-7a-methyl-1-oxo-octahydro-1H-inden-4-yl]propanoyl-CoA + A = (2E)-3-[(3aS,4S,5R,7aS)-5-hydroxy-7a-methyl-1-oxo-octahydro-1H-inden-4-yl]prop-2-enoyl-CoA + AH2. It functions in the pathway steroid metabolism; cholesterol degradation. In terms of biological role, involved in cholesterol degradation. Catalyzes the dehydrogenation of 5OH-HIP-CoA to 5OH-HIPE-CoA. This Mycolicibacterium smegmatis (strain ATCC 700084 / mc(2)155) (Mycobacterium smegmatis) protein is Acyl-CoA dehydrogenase IpdE2.